Consider the following 220-residue polypeptide: Superoxide dismutase [Fe] (220 aa).

The Fe cation site is built by histidine 26, histidine 73, aspartate 164, and histidine 168.

The protein belongs to the iron/manganese superoxide dismutase family. Homodimer. Requires Fe cation as cofactor.

The enzyme catalyses 2 superoxide + 2 H(+) = H2O2 + O2. Destroys superoxide anion radicals which are normally produced within the cells and which are toxic to biological systems. This Campylobacter jejuni subsp. jejuni serotype O:2 (strain ATCC 700819 / NCTC 11168) protein is Superoxide dismutase [Fe] (sodB).